The following is a 374-amino-acid chain: Retron Eco8 reverse transcriptase (374 aa).

The Reverse transcriptase domain maps to glutamate 25–isoleucine 252. The Mg(2+) site is built by aspartate 107, aspartate 200, and aspartate 201.

It belongs to the bacterial reverse transcriptase family.

The catalysed reaction is DNA(n) + a 2'-deoxyribonucleoside 5'-triphosphate = DNA(n+1) + diphosphate. In terms of biological role, reverse transcriptase (RT) component of antiviral defense system retron Eco8, composed of this RT, the following endonuclease and a non-coding RNA (ncRNA) encoded between them. Expression of retron Eco8 confers protection against bacteriophages T4, T6, T7 and SECphi4, SECphi6 and SECphi18. At multiplicity of infection (MOI) of 0.02 cultures slow growth when infected with SECphi4 but do not collapse, at MOI 2 cultures collapse. Responsible for synthesis of msDNA (a branched molecule with RNA linked by a 2',5'-phosphodiester bond to ssDNA). The retron transcript serves as primer (from a conserved internal G residue) and template for the reaction, and codes for the RT. The sequence is that of Retron Eco8 reverse transcriptase from Escherichia coli.